Consider the following 218-residue polypeptide: Histone chaperone ASF1B (218 aa).

It belongs to the ASF1 family. As to quaternary structure, interacts with histone H3 and histone H4. Interacts strongly with the N-terminus of TOUSLED. Phosphorylated in vitro by TOUSLED.

Its subcellular location is the nucleus. Its function is as follows. Histone chaperone that facilitates histone deposition and histone exchange and removal during nucleosome assembly and disassembly. The sequence is that of Histone chaperone ASF1B (ASF1B) from Arabidopsis thaliana (Mouse-ear cress).